The primary structure comprises 451 residues: Tubulin alpha chain (451 aa).

The MREC motif signature appears at 1–4 (MREC). Position 11 (Q11) interacts with GTP. Position 40 is an N6-acetyllysine (K40). Residues E71, S140, G144, T145, T179, N206, and N228 each contribute to the GTP site. A Mg(2+)-binding site is contributed by E71. E254 is a catalytic residue. A disordered region spans residues 432 to 451 (YEEVGVDSVEGEGEEEGEEY). Position 445 is a 5-glutamyl polyglutamate (E445).

This sequence belongs to the tubulin family. Dimer of alpha and beta chains. A typical microtubule is a hollow water-filled tube with an outer diameter of 25 nm and an inner diameter of 15 nM. Alpha-beta heterodimers associate head-to-tail to form protofilaments running lengthwise along the microtubule wall with the beta-tubulin subunit facing the microtubule plus end conferring a structural polarity. Microtubules usually have 13 protofilaments but different protofilament numbers can be found in some organisms and specialized cells. The cofactor is Mg(2+). Some glutamate residues at the C-terminus are polyglycylated, resulting in polyglycine chains on the gamma-carboxyl group. Glycylation is mainly limited to tubulin incorporated into axonemes (cilia and flagella) whereas glutamylation is prevalent in neuronal cells, centrioles, axonemes, and the mitotic spindle. Both modifications can coexist on the same protein on adjacent residues, and lowering polyglycylation levels increases polyglutamylation, and reciprocally. The precise function of polyglycylation is still unclear. In terms of processing, some glutamate residues at the C-terminus are polyglutamylated, resulting in polyglutamate chains on the gamma-carboxyl group. Polyglutamylation plays a key role in microtubule severing by spastin (SPAST). SPAST preferentially recognizes and acts on microtubules decorated with short polyglutamate tails: severing activity by SPAST increases as the number of glutamates per tubulin rises from one to eight, but decreases beyond this glutamylation threshold. Post-translationally, acetylation of alpha chains at Lys-40 is located inside the microtubule lumen. This modification has been correlated with increased microtubule stability, intracellular transport and ciliary assembly. Undergoes a tyrosination/detyrosination cycle, the cyclic removal and re-addition of a C-terminal tyrosine residue by the enzymes tubulin tyrosine carboxypeptidase (MATCAP, VASH1 or VASH2) and tubulin tyrosine ligase (TTL), respectively. In terms of processing, tyrosination promotes microtubule interaction with CAP-Gly microtubule plus-end tracking proteins. Tyrosinated tubulins regulate the initiation of dynein-driven motility. Post-translationally, detyrosination is involved in metaphase plate congression by guiding chromosomes during mitosis. Detyrosination increases microtubules-dependent mechanotransduction in dystrophic cardiac and skeletal muscle. In cardiomyocytes, detyrosinated microtubules are required to resist to contractile compression during contraction.

Its subcellular location is the cytoplasm. The protein localises to the cytoskeleton. It carries out the reaction GTP + H2O = GDP + phosphate + H(+). Its function is as follows. Tubulin is the major constituent of microtubules, a cylinder consisting of laterally associated linear protofilaments composed of alpha- and beta-tubulin heterodimers. Microtubules grow by the addition of GTP-tubulin dimers to the microtubule end, where a stabilizing cap forms. Below the cap, tubulin dimers are in GDP-bound state, owing to GTPase activity of alpha-tubulin. In Torpedo marmorata (Marbled electric ray), this protein is Tubulin alpha chain.